Consider the following 260-residue polypeptide: Hydroxyethylthiazole kinase (260 aa).

Substrate is bound at residue M49. 2 residues coordinate ATP: R124 and T170. G197 is a substrate binding site.

It belongs to the Thz kinase family. The cofactor is Mg(2+).

It catalyses the reaction 5-(2-hydroxyethyl)-4-methylthiazole + ATP = 4-methyl-5-(2-phosphooxyethyl)-thiazole + ADP + H(+). Its pathway is cofactor biosynthesis; thiamine diphosphate biosynthesis; 4-methyl-5-(2-phosphoethyl)-thiazole from 5-(2-hydroxyethyl)-4-methylthiazole: step 1/1. Catalyzes the phosphorylation of the hydroxyl group of 4-methyl-5-beta-hydroxyethylthiazole (THZ). The protein is Hydroxyethylthiazole kinase of Yersinia enterocolitica serotype O:8 / biotype 1B (strain NCTC 13174 / 8081).